The following is a 155-amino-acid chain: Protein U1 (155 aa).

It belongs to the nanovirus U1 protein family.

In Cicer arietinum (Chickpea), this protein is Protein U1 (DNA-U1).